The sequence spans 211 residues: ATP phosphoribosyltransferase (211 aa).

Belongs to the ATP phosphoribosyltransferase family. Short subfamily. In terms of assembly, heteromultimer composed of HisG and HisZ subunits.

Its subcellular location is the cytoplasm. It catalyses the reaction 1-(5-phospho-beta-D-ribosyl)-ATP + diphosphate = 5-phospho-alpha-D-ribose 1-diphosphate + ATP. It functions in the pathway amino-acid biosynthesis; L-histidine biosynthesis; L-histidine from 5-phospho-alpha-D-ribose 1-diphosphate: step 1/9. Catalyzes the condensation of ATP and 5-phosphoribose 1-diphosphate to form N'-(5'-phosphoribosyl)-ATP (PR-ATP). Has a crucial role in the pathway because the rate of histidine biosynthesis seems to be controlled primarily by regulation of HisG enzymatic activity. This Pseudomonas putida (strain ATCC 47054 / DSM 6125 / CFBP 8728 / NCIMB 11950 / KT2440) protein is ATP phosphoribosyltransferase.